Consider the following 276-residue polypeptide: Putative pyruvate, phosphate dikinase regulatory protein 1 (276 aa).

Residue 150 to 157 coordinates ADP; it reads GLPRTSKT.

The protein belongs to the pyruvate, phosphate/water dikinase regulatory protein family. PDRP subfamily.

The enzyme catalyses N(tele)-phospho-L-histidyl/L-threonyl-[pyruvate, phosphate dikinase] + ADP = N(tele)-phospho-L-histidyl/O-phospho-L-threonyl-[pyruvate, phosphate dikinase] + AMP + H(+). It carries out the reaction N(tele)-phospho-L-histidyl/O-phospho-L-threonyl-[pyruvate, phosphate dikinase] + phosphate + H(+) = N(tele)-phospho-L-histidyl/L-threonyl-[pyruvate, phosphate dikinase] + diphosphate. Bifunctional serine/threonine kinase and phosphorylase involved in the regulation of the pyruvate, phosphate dikinase (PPDK) by catalyzing its phosphorylation/dephosphorylation. In Syntrophomonas wolfei subsp. wolfei (strain DSM 2245B / Goettingen), this protein is Putative pyruvate, phosphate dikinase regulatory protein 1.